Consider the following 251-residue polypeptide: HTH-type transcriptional regulator UlaR (251 aa).

Residues 3-58 (EAQRHQILLEMLAQLGFVTVEKVVERLGISPATARRDINKLGESGKLKKVRNGAEA) enclose the HTH deoR-type domain. The H-T-H motif DNA-binding region spans 20–39 (VTVEKVVERLGISPATARRD).

The protein resides in the cytoplasm. In terms of biological role, represses ulaG and the ulaABCDEF operon. The polypeptide is HTH-type transcriptional regulator UlaR (Shigella flexneri).